The sequence spans 209 residues: Large ribosomal subunit protein bL25 (209 aa).

The segment at 188-209 (STSMEKEGEGSQEPTAAPSSEN) is disordered. The segment covering 199-209 (QEPTAAPSSEN) has biased composition (polar residues).

The protein belongs to the bacterial ribosomal protein bL25 family. CTC subfamily. Part of the 50S ribosomal subunit; part of the 5S rRNA/L5/L18/L25 subcomplex. Contacts the 5S rRNA. Binds to the 5S rRNA independently of L5 and L18.

Its function is as follows. This is one of the proteins that binds to the 5S RNA in the ribosome where it forms part of the central protuberance. The sequence is that of Large ribosomal subunit protein bL25 from Ehrlichia canis (strain Jake).